The primary structure comprises 185 residues: Ribosome-recycling factor (185 aa).

This sequence belongs to the RRF family.

It localises to the cytoplasm. Its function is as follows. Responsible for the release of ribosomes from messenger RNA at the termination of protein biosynthesis. May increase the efficiency of translation by recycling ribosomes from one round of translation to another. The chain is Ribosome-recycling factor from Shewanella sp. (strain MR-4).